The chain runs to 251 residues: Transcriptional cofactor Bfc (251 aa).

Interacts with srp (via GATA-type Zn-finger domain); this interaction enhances srp binding to the promoter of crq/croquemort.

It is found in the nucleus. Its function is as follows. Transcriptional cofactor involved in efferocytosis. Together with srp mediates expression of the phagocytic receptor crq/croquemort in response to apoptotic cells, and is up-regulated by crq/croquemort in a positive feedback mechanism. Involved in macrophage engulfment and clearance of apoptotic cells during embryogenesis. This Drosophila melanogaster (Fruit fly) protein is Transcriptional cofactor Bfc.